The chain runs to 254 residues: uncharacterized protein (254 aa).

This is an uncharacterized protein from Methanocaldococcus jannaschii (strain ATCC 43067 / DSM 2661 / JAL-1 / JCM 10045 / NBRC 100440) (Methanococcus jannaschii).